Consider the following 86-residue polypeptide: Small ribosomal subunit protein bS20 (86 aa).

Residues 1 to 11 are compositionally biased toward basic residues; it reads MANHKSALKRA. The disordered stretch occupies residues 1–27; that stretch reads MANHKSALKRARQNEERRIRNRARKTR.

The protein belongs to the bacterial ribosomal protein bS20 family.

Binds directly to 16S ribosomal RNA. In Syntrophobacter fumaroxidans (strain DSM 10017 / MPOB), this protein is Small ribosomal subunit protein bS20.